A 382-amino-acid chain; its full sequence is Galactokinase (382 aa).

34-37 (EHTD) contributes to the substrate binding site. 124-130 (GAGLSSS) serves as a coordination point for ATP. 2 residues coordinate Mg(2+): serine 130 and glutamate 162. Aspartate 174 serves as the catalytic Proton acceptor. Position 223 (tyrosine 223) interacts with substrate.

The protein belongs to the GHMP kinase family. GalK subfamily.

Its subcellular location is the cytoplasm. It carries out the reaction alpha-D-galactose + ATP = alpha-D-galactose 1-phosphate + ADP + H(+). Its pathway is carbohydrate metabolism; galactose metabolism. In terms of biological role, catalyzes the transfer of the gamma-phosphate of ATP to D-galactose to form alpha-D-galactose-1-phosphate (Gal-1-P). The sequence is that of Galactokinase from Escherichia fergusonii (strain ATCC 35469 / DSM 13698 / CCUG 18766 / IAM 14443 / JCM 21226 / LMG 7866 / NBRC 102419 / NCTC 12128 / CDC 0568-73).